The following is a 517-amino-acid chain: Ubiquitin carboxyl-terminal hydrolase 30 (517 aa).

Residues 1 to 35 (MLSSRAEAAMTAADRAIQRFLRTGAAVRYKVMKNW) lie on the Mitochondrial intermembrane side of the membrane. Residues 36 to 56 (GVIGGIAAALAAGIYVIWGPI) form a helical membrane-spanning segment. At 57–517 (TERKKRRKGL…HQSQECKSEE (461 aa)) the chain is on the cytoplasmic side. Residues 68–502 (PGLVNLGNTC…SAYLLFYERV (435 aa)) form the USP domain. Cysteine 77 acts as the Nucleophile in catalysis. Glycyl lysine isopeptide (Lys-Gly) (interchain with G-Cter in ubiquitin) cross-links involve residues lysine 235 and lysine 289. Positions 364-395 (SQHNPKLNKNPGPTLELQDGPGAPTPVLNQPG) are disordered. The active-site Proton acceptor is the histidine 452.

The protein belongs to the peptidase C19 family. Post-translationally, ubiquitinated by parkin (PRKN) at Lys-235 and Lys-289, leading to its degradation. As to expression, expressed in skeletal muscle, pancreas, liver and kidney.

It localises to the mitochondrion outer membrane. It carries out the reaction Thiol-dependent hydrolysis of ester, thioester, amide, peptide and isopeptide bonds formed by the C-terminal Gly of ubiquitin (a 76-residue protein attached to proteins as an intracellular targeting signal).. Its activity is regulated as follows. Inhibited by the diterpenoid derivative 15-oxospiramilactone (S3). Deubiquitinating enzyme tethered to the mitochondrial outer membrane that acts as a key inhibitor of mitophagy by counteracting the action of parkin (PRKN): hydrolyzes ubiquitin attached by parkin on target proteins, such as RHOT1/MIRO1 and TOMM20, thereby blocking parkin's ability to drive mitophagy. Preferentially cleaves 'Lys-6'- and 'Lys-11'-linked polyubiquitin chains, 2 types of linkage that participate in mitophagic signaling. Does not cleave efficiently polyubiquitin phosphorylated at 'Ser-65'. Acts as a negative regulator of mitochondrial fusion by mediating deubiquitination of MFN1 and MFN2. This chain is Ubiquitin carboxyl-terminal hydrolase 30, found in Homo sapiens (Human).